The chain runs to 321 residues: Electron transfer flavoprotein subunit alpha (321 aa).

FAD contacts are provided by arginine 211, serine 236, arginine 237, glutamine 250, valine 251, serine 254, glycine 255, serine 270, serine 272, glutamine 274, histidine 275, asparagine 289, aspartate 307, and isoleucine 308.

In terms of assembly, heterodimer of an alpha and a beta subunit. Forms a ternary complex with trimethylamine dehydrogenase. FAD serves as cofactor.

Heterodimeric electron transfer flavoprotein that accepts electrons from trimethylamine dehydrogenase. It transfers the electrons to the main respiratory chain via ETF-ubiquinone oxidoreductase (ETF dehydrogenase). The chain is Electron transfer flavoprotein subunit alpha (etfA) from Methylophilus methylotrophus (Bacterium W3A1).